Reading from the N-terminus, the 347-residue chain is Ferredoxin--NADP reductase 1 (347 aa).

FAD is bound by residues T26, D45, Q53, Y58, V98, F133, D298, and S339.

The protein belongs to the ferredoxin--NADP reductase type 2 family. In terms of assembly, homodimer. It depends on FAD as a cofactor.

The catalysed reaction is 2 reduced [2Fe-2S]-[ferredoxin] + NADP(+) + H(+) = 2 oxidized [2Fe-2S]-[ferredoxin] + NADPH. In Chloroherpeton thalassium (strain ATCC 35110 / GB-78), this protein is Ferredoxin--NADP reductase 1.